Here is a 404-residue protein sequence, read N- to C-terminus: S-adenosylmethionine synthase (404 aa).

Positions 1–13 (MSHSRYFFTSESV) are enriched in polar residues. Residues 1-20 (MSHSRYFFTSESVSEGHPDK) are disordered. H17 is an ATP binding site. D19 provides a ligand contact to Mg(2+). Position 45 (E45) interacts with K(+). E58 and Q101 together coordinate L-methionine. The interval 101-111 (QSPDINRGVDR) is flexible loop. ATP is bound by residues 172-174 (DSK), 246-247 (RF), D255, 261-262 (RK), A278, and K282. An L-methionine-binding site is contributed by D255. K286 serves as a coordination point for L-methionine.

This sequence belongs to the AdoMet synthase family. Homotetramer; dimer of dimers. Mg(2+) is required as a cofactor. K(+) serves as cofactor.

Its subcellular location is the cytoplasm. It carries out the reaction L-methionine + ATP + H2O = S-adenosyl-L-methionine + phosphate + diphosphate. It participates in amino-acid biosynthesis; S-adenosyl-L-methionine biosynthesis; S-adenosyl-L-methionine from L-methionine: step 1/1. Its function is as follows. Catalyzes the formation of S-adenosylmethionine (AdoMet) from methionine and ATP. The overall synthetic reaction is composed of two sequential steps, AdoMet formation and the subsequent tripolyphosphate hydrolysis which occurs prior to release of AdoMet from the enzyme. In Chlorobaculum parvum (strain DSM 263 / NCIMB 8327) (Chlorobium vibrioforme subsp. thiosulfatophilum), this protein is S-adenosylmethionine synthase.